The following is a 460-amino-acid chain: Ribulose bisphosphate carboxylase (460 aa).

Asn112 is a substrate binding site. The active-site Proton acceptor is Lys167. Lys169 serves as a coordination point for substrate. Mg(2+)-binding residues include Lys192, Asp194, and Glu195. Position 192 is an N6-carboxylysine (Lys192). His288 acts as the Proton acceptor in catalysis. Substrate-binding residues include Arg289, His322, and Ser369.

The protein belongs to the RuBisCO large chain family. Type II subfamily. In terms of assembly, homodimer. Mg(2+) is required as a cofactor.

It catalyses the reaction 2 (2R)-3-phosphoglycerate + 2 H(+) = D-ribulose 1,5-bisphosphate + CO2 + H2O. The catalysed reaction is D-ribulose 1,5-bisphosphate + O2 = 2-phosphoglycolate + (2R)-3-phosphoglycerate + 2 H(+). RuBisCO catalyzes two reactions: the carboxylation of D-ribulose 1,5-bisphosphate, the primary event in carbon dioxide fixation, as well as the oxidative fragmentation of the pentose substrate. Both reactions occur simultaneously and in competition at the same active site. In Rhodopseudomonas palustris (strain BisA53), this protein is Ribulose bisphosphate carboxylase.